A 470-amino-acid chain; its full sequence is ATP synthase subunit beta (470 aa).

156–163 (GGAGVGKT) is a binding site for ATP.

Belongs to the ATPase alpha/beta chains family. In terms of assembly, F-type ATPases have 2 components, CF(1) - the catalytic core - and CF(0) - the membrane proton channel. CF(1) has five subunits: alpha(3), beta(3), gamma(1), delta(1), epsilon(1). CF(0) has three main subunits: a(1), b(2) and c(9-12). The alpha and beta chains form an alternating ring which encloses part of the gamma chain. CF(1) is attached to CF(0) by a central stalk formed by the gamma and epsilon chains, while a peripheral stalk is formed by the delta and b chains.

It is found in the cell inner membrane. It carries out the reaction ATP + H2O + 4 H(+)(in) = ADP + phosphate + 5 H(+)(out). Its function is as follows. Produces ATP from ADP in the presence of a proton gradient across the membrane. The catalytic sites are hosted primarily by the beta subunits. The protein is ATP synthase subunit beta of Thermosipho africanus (strain TCF52B).